We begin with the raw amino-acid sequence, 352 residues long: Zinc transporter 1 (352 aa).

A signal peptide spans 1–29 (MARTMTMRVSSLLVAVVLLAALSFQACSG). At 30–56 (HGGINDGDGQVDAPATPASSSGVRSKG) the chain is on the extracellular side. A helical transmembrane segment spans residues 57-77 (LIAVKVWCLVILLVFTFAGGV). Topologically, residues 78–87 (SPYFYRWNES) are cytoplasmic. A helical membrane pass occupies residues 88-108 (FLLLGTQFAAGVFLGTALMHF). Residues 109 to 127 (LADSTSTFKGLTTNQYPFS) are Extracellular-facing. Residues 128–148 (FMLTCVGFLLTMLSDLVIAAV) traverse the membrane as a helical segment. Over 149–200 (ARRSAAAGVSDNQVSEQQQRQQAEGAVMSRKEEEAAAVAHPAMLVRTSSFED) the chain is Cytoplasmic. Residues 201–221 (AVLLIVALCFHSVFEGIAIGV) traverse the membrane as a helical segment. Topologically, residues 222–230 (SASKSEAWR) are extracellular. The chain crosses the membrane as a helical span at residues 231 to 251 (NLWTIGLHKIFAAVAMGIALL). Residues 252–262 (RMIPKRPFLMT) are Cytoplasmic-facing. The helical transmembrane segment at 263 to 283 (VVYSLAFAVSSPVGVGIGIAI) threads the bilayer. Residues 284 to 296 (DATSQGRAADWTY) lie on the Extracellular side of the membrane. A helical membrane pass occupies residues 297–317 (AISMGLATGVFIYVAINHLIA). Topologically, residues 318–330 (KGYRPHHPTAADK) are cytoplasmic. A helical transmembrane segment spans residues 331-351 (PLFKFLAVLLGVAVMAVVMIW). Position 352 (D352) is a topological domain, extracellular.

This sequence belongs to the ZIP transporter (TC 2.A.5) family. Expressed in vascular bundles of roots and leaves.

It is found in the cell membrane. Functionally, zinc transporter that may mediate zinc uptake from the rhizosphere. May also transport other divalent cations. In Oryza sativa subsp. japonica (Rice), this protein is Zinc transporter 1 (ZIP1).